Reading from the N-terminus, the 202-residue chain is MRFTVKQIVWLKVLLHLAGFLPLVWLFWAGHQGYFSADPAKDIQHFTGRMALKFLLATLLVSPLARYAKQPLLIRVRRLLGLWCFAWATLHLTSYTLLELGINNLALLGSEIITRPYLTLGMISWAILLALAVTSTQAMQRKLGRRWQLLHNFVYLVAILAPIHYLWSVKIVSPQPVVYALLAAGLLTWRYKKFRQWWRAIR.

Helical transmembrane passes span 8–28 (IVWL…WLFW), 82–102 (LWCF…ELGI), 116–136 (PYLT…VTST), 149–169 (LLHN…LWSV), and 171–191 (IVSP…TWRY).

It belongs to the MsrQ family. In terms of assembly, heterodimer of a catalytic subunit (MsrP) and a heme-binding subunit (MsrQ). It depends on FMN as a cofactor. Heme b is required as a cofactor.

The protein resides in the cell inner membrane. Part of the MsrPQ system that repairs oxidized periplasmic proteins containing methionine sulfoxide residues (Met-O), using respiratory chain electrons. Thus protects these proteins from oxidative-stress damage caused by reactive species of oxygen and chlorine generated by the host defense mechanisms. MsrPQ is essential for the maintenance of envelope integrity under bleach stress, rescuing a wide series of structurally unrelated periplasmic proteins from methionine oxidation. MsrQ provides electrons for reduction to the reductase catalytic subunit MsrP, using the quinone pool of the respiratory chain. This chain is Protein-methionine-sulfoxide reductase heme-binding subunit MsrQ, found in Klebsiella pneumoniae subsp. pneumoniae (strain ATCC 700721 / MGH 78578).